Reading from the N-terminus, the 88-residue chain is Small ribosomal subunit protein bS20 (88 aa).

Belongs to the bacterial ribosomal protein bS20 family.

In terms of biological role, binds directly to 16S ribosomal RNA. In Blochmanniella floridana, this protein is Small ribosomal subunit protein bS20.